Here is a 658-residue protein sequence, read N- to C-terminus: Translation factor GUF1, mitochondrial (658 aa).

Residues 1–40 constitute a mitochondrion transit peptide; the sequence is MRGCLQTVRWLTSAWQRPRSYSPLSRAAPCRFFNVSIPRN. Positions 60–240 constitute a tr-type G domain; that stretch reads DRFRNFCIVA…TVVEQIPAPV (181 aa). GTP is bound by residues 69 to 76, 133 to 137, and 187 to 190; these read AHVDHGKS, DTPGH, and NKVD.

This sequence belongs to the TRAFAC class translation factor GTPase superfamily. Classic translation factor GTPase family. LepA subfamily.

The protein resides in the mitochondrion inner membrane. It carries out the reaction GTP + H2O = GDP + phosphate + H(+). Functionally, promotes mitochondrial protein synthesis. May act as a fidelity factor of the translation reaction, by catalyzing a one-codon backward translocation of tRNAs on improperly translocated ribosomes. Binds to mitochondrial ribosomes in a GTP-dependent manner. The protein is Translation factor GUF1, mitochondrial of Paracoccidioides lutzii (strain ATCC MYA-826 / Pb01) (Paracoccidioides brasiliensis).